Consider the following 186-residue polypeptide: Ribosome rescue factor SmrB (186 aa).

The region spanning 99 to 174 (IDLHGLTQHQ…SDAAIIVIIE (76 aa)) is the Smr domain.

This sequence belongs to the SmrB family. As to quaternary structure, associates with collided ribosomes, but not with correctly translating polysomes.

In terms of biological role, acts as a ribosome collision sensor. Detects stalled/collided disomes (pairs of ribosomes where the leading ribosome is stalled and a second ribosome has collided with it) and endonucleolytically cleaves mRNA at the 5' boundary of the stalled ribosome. Stalled/collided disomes form a new interface (primarily via the 30S subunits) that binds SmrB. Cleaved mRNA becomes available for tmRNA ligation, leading to ribosomal subunit dissociation and rescue of stalled ribosomes. The sequence is that of Ribosome rescue factor SmrB from Buchnera aphidicola subsp. Acyrthosiphon pisum (strain Tuc7).